The chain runs to 389 residues: Urotensin-2 receptor (389 aa).

The span at 1 to 10 (MALTPESPSS) shows a compositional bias: polar residues. A disordered region spans residues 1–39 (MALTPESPSSFPGLAATGSSVPEPPGGPNATLNSSWASP). The Extracellular segment spans residues 1–54 (MALTPESPSSFPGLAATGSSVPEPPGGPNATLNSSWASPTEPSSLEDLVATGTI). 2 N-linked (GlcNAc...) asparagine glycosylation sites follow: Asn29 and Asn33. Positions 30–39 (ATLNSSWASP) are enriched in polar residues. A helical transmembrane segment spans residues 55 to 77 (GTLLSAMGVVGVVGNAYTLVVTC). Residues 78–87 (RSLRAVASMY) are Cytoplasmic-facing. Residues 88-113 (VYVVNLALADLLYLLSIPFIVATYVT) form a helical membrane-spanning segment. Topologically, residues 114-124 (KEWHFGDVGCR) are extracellular. Residues Cys123 and Cys199 are joined by a disulfide bond. A helical transmembrane segment spans residues 125 to 146 (VLFGLDFLTMHASIFTLTVMSS). Over 147-167 (ERYAAVLRPLDTVQRPKGYRK) the chain is Cytoplasmic. Residues 168 to 186 (LLALGTWLLALLLTLPVML) traverse the membrane as a helical segment. Residues 187 to 209 (AMRLVRRGPKSLCLPAWGPRAHR) are Extracellular-facing. A helical membrane pass occupies residues 210–232 (AYLTLLFATSIAGPGLLIGLLYA). Residues 233-258 (RLARAYRRSQRASFKRARRPGARALR) lie on the Cytoplasmic side of the membrane. The helical transmembrane segment at 259-284 (LVLGIVLLFWACFLPFWLWQLLAQYH) threads the bilayer. Residues 285-297 (QAPLAPRTARIVN) lie on the Extracellular side of the membrane. Residues 298–318 (YLTTCLTYGNSCANPFLYTLL) form a helical membrane-spanning segment. The Cytoplasmic portion of the chain corresponds to 319–389 (TRNYRDHLRG…PAPEGPRAPA (71 aa)). The tract at residues 328–389 (GRVRGPGSGG…PAPEGPRAPA (62 aa)) is disordered. Gly residues predominate over residues 331 to 340 (RGPGSGGGRG). The segment covering 355-368 (SGRSLSSCSPQPTD) has biased composition (polar residues). The segment covering 377–389 (PARPAPEGPRAPA) has biased composition (pro residues).

Belongs to the G-protein coupled receptor 1 family. Most abundant expression in the heart and pancreas.

Its subcellular location is the cell membrane. Functionally, high affinity receptor for urotensin-2 and urotensin-2B. The activity of this receptor is mediated by a G-protein that activate a phosphatidylinositol-calcium second messenger system. In Homo sapiens (Human), this protein is Urotensin-2 receptor (UTS2R).